We begin with the raw amino-acid sequence, 318 residues long: tRNA-cytidine(32) 2-sulfurtransferase (318 aa).

A PP-loop motif motif is present at residues 52-57 (SGGKDS). 3 residues coordinate [4Fe-4S] cluster: Cys-127, Cys-130, and Cys-218.

The protein belongs to the TtcA family. Homodimer. Mg(2+) serves as cofactor. It depends on [4Fe-4S] cluster as a cofactor.

It localises to the cytoplasm. The catalysed reaction is cytidine(32) in tRNA + S-sulfanyl-L-cysteinyl-[cysteine desulfurase] + AH2 + ATP = 2-thiocytidine(32) in tRNA + L-cysteinyl-[cysteine desulfurase] + A + AMP + diphosphate + H(+). It functions in the pathway tRNA modification. In terms of biological role, catalyzes the ATP-dependent 2-thiolation of cytidine in position 32 of tRNA, to form 2-thiocytidine (s(2)C32). The sulfur atoms are provided by the cysteine/cysteine desulfurase (IscS) system. This is tRNA-cytidine(32) 2-sulfurtransferase from Actinobacillus pleuropneumoniae serotype 7 (strain AP76).